Consider the following 225-residue polypeptide: Riboflavin kinase (225 aa).

The unknown stretch occupies residues 1 to 89 (MPDIKYLKKL…SRIFSPDLDI (89 aa)). The tract at residues 90–225 (LELEGKVLKG…LKKQGTENQK (136 aa)) is riboflavin kinase. 99–104 (GLGEGQ) is a CDP binding site. Mg(2+) is bound by residues Thr-128 and Asn-130. Residues Thr-185 and Glu-193 each contribute to the FMN site. A CDP-binding site is contributed by 198–201 (IKLR).

It belongs to the archaeal riboflavin kinase family. Mg(2+) serves as cofactor.

The catalysed reaction is riboflavin + CTP = CDP + FMN + H(+). The protein operates within cofactor biosynthesis; FMN biosynthesis; FMN from riboflavin (CTP route): step 1/1. Catalyzes the CTP-dependent phosphorylation of riboflavin (vitamin B2) to form flavin mononucleotide (FMN). This is Riboflavin kinase (ribK) from Methanosarcina barkeri (strain Fusaro / DSM 804).